The following is a 163-amino-acid chain: uncharacterized protein (163 aa).

Positions 23-113 (DFPEEPPLWV…QVADGVHSQQ (91 aa)) are disordered. Serine 102 is subject to Phosphoserine.

This is an uncharacterized protein from Mus musculus (Mouse).